A 485-amino-acid polypeptide reads, in one-letter code: Cysteine--tRNA ligase (485 aa).

C27 is a binding site for Zn(2+). The 'HIGH' region signature appears at 29-39 (ITAYDLCHIGH). Residues C208, H233, and E237 each contribute to the Zn(2+) site. The 'KMSKS' region motif lies at 265–269 (KMSKS). K268 provides a ligand contact to ATP.

It belongs to the class-I aminoacyl-tRNA synthetase family. In terms of assembly, monomer. The cofactor is Zn(2+).

Its subcellular location is the cytoplasm. The enzyme catalyses tRNA(Cys) + L-cysteine + ATP = L-cysteinyl-tRNA(Cys) + AMP + diphosphate. The sequence is that of Cysteine--tRNA ligase from Maridesulfovibrio salexigens (strain ATCC 14822 / DSM 2638 / NCIMB 8403 / VKM B-1763) (Desulfovibrio salexigens).